The following is a 251-amino-acid chain: Flap endonuclease Xni (251 aa).

Asp104 lines the Mg(2+) pocket. Residues 160–249 enclose the 5'-3' exonuclease domain; the sequence is VQPQQLPDYW…IDGNLQQLRL (90 aa). Leu171, Ala172, Pro180, Val182, and Ile185 together coordinate K(+). The interaction with DNA stretch occupies residues 184–189; that stretch reads GIGPKS.

Belongs to the Xni family. Mg(2+) is required as a cofactor. It depends on K(+) as a cofactor.

Has flap endonuclease activity. During DNA replication, flap endonucleases cleave the 5'-overhanging flap structure that is generated by displacement synthesis when DNA polymerase encounters the 5'-end of a downstream Okazaki fragment. The chain is Flap endonuclease Xni from Escherichia coli O45:K1 (strain S88 / ExPEC).